Reading from the N-terminus, the 327-residue chain is Olfactory receptor 6A2 (327 aa).

Topologically, residues 1–26 are extracellular; the sequence is MEWRNHSGRVSEFVLLGFPAPAPLQV. N-linked (GlcNAc...) asparagine glycosylation occurs at asparagine 5. Residues 27–47 form a helical membrane-spanning segment; it reads LLFALLLLAYVLVLTENTLII. The Cytoplasmic portion of the chain corresponds to 48 to 55; the sequence is MAIRNHST. Residues 56-76 traverse the membrane as a helical segment; that stretch reads LHKPMYFFLANMSFLEIWYVT. The Extracellular segment spans residues 77 to 104; sequence VTIPKMLAGFVGSKQDHGQLISFEGCMT. An intrachain disulfide couples cysteine 102 to cysteine 194. A helical transmembrane segment spans residues 105 to 125; it reads QLYFFLGLGCTECVLLAVMAY. Residues 126-144 are Cytoplasmic-facing; sequence DRYMAICYPLHYPVIVSGR. The chain crosses the membrane as a helical span at residues 145-165; that stretch reads LCVQMAAGSWAGGFGISMVKV. Residues 166–201 are Extracellular-facing; the sequence is FLISGLSYCGPNIINHFFCDVSPLLNLSCTDMSTAE. Asparagine 191 is a glycosylation site (N-linked (GlcNAc...) asparagine). Residues 202-222 traverse the membrane as a helical segment; that stretch reads LTDFILAIFILLGPLSVTGAS. The Cytoplasmic segment spans residues 223-242; the sequence is YVAITGAVMHIPSAAGRYKA. The helical transmembrane segment at 243–263 threads the bilayer; sequence FSTCASHLTVVIIFYAASIFI. Over 264–276 the chain is Extracellular; sequence YARPKALSAFDTN. A helical membrane pass occupies residues 277–297; that stretch reads KLVSVLYAVIVPLLNPIIYCL. Residues 298 to 327 lie on the Cytoplasmic side of the membrane; sequence RNQEVKRALCCTLHLYQHQDPDPKKASRNV.

The protein belongs to the G-protein coupled receptor 1 family.

The protein localises to the cell membrane. Odorant receptor. This chain is Olfactory receptor 6A2 (OR6A2), found in Homo sapiens (Human).